The following is a 350-amino-acid chain: Phosphotriesterase-related protein (350 aa).

The a divalent metal cation site is built by histidine 22, histidine 24, glutamate 169, histidine 201, histidine 230, and aspartate 298.

It belongs to the metallo-dependent hydrolases superfamily. Phosphotriesterase family. The cofactor is a divalent metal cation.

The chain is Phosphotriesterase-related protein from Drosophila ananassae (Fruit fly).